Here is a 323-residue protein sequence, read N- to C-terminus: Transmembrane protein 59 (323 aa).

Positions 1-35 (MAAPKGSLWVRTQLGLPPLLLLTMALAGGSGTASA) are cleaved as a signal peptide. Topologically, residues 36–238 (EAFDSVLGDT…GFLRCLSLNS (203 aa)) are extracellular. An N-linked (GlcNAc...) asparagine glycan is attached at N90. Residues 239–259 (GWILTTTLVLSVMVLLWICCA) traverse the membrane as a helical segment. Residues 260-323 (TVATAVEQYV…TKVNLAHSEI (64 aa)) lie on the Cytoplasmic side of the membrane. The ATG16L1-binding motif motif lies at 263 to 281 (TAVEQYVPSEKLSIYGDLE). T303 bears the Phosphothreonine mark.

It belongs to the TMEM59 family. Interacts with ATG16L1 (via WD repeats). In terms of processing, N-glycosylated.

The protein localises to the late endosome membrane. It is found in the lysosome membrane. Its subcellular location is the cell membrane. It localises to the golgi apparatus membrane. In terms of biological role, acts as a regulator of autophagy in response to S.aureus infection by promoting activation of LC3 (MAP1LC3A, MAP1LC3B or MAP1LC3C). Acts by interacting with ATG16L1, leading to promote a functional complex between LC3 and ATG16L1 and promoting LC3 lipidation and subsequent activation of autophagy. Modulates the O-glycosylation and complex N-glycosylation steps occurring during the Golgi maturation of several proteins such as APP, BACE1, SEAP or PRNP. Inhibits APP transport to the cell surface and further shedding. In Homo sapiens (Human), this protein is Transmembrane protein 59 (TMEM59).